Here is a 102-residue protein sequence, read N- to C-terminus: uncharacterized protein (102 aa).

A helical membrane pass occupies residues 77–96; that stretch reads FFSACVAKSYSSFFISICIL.

It is found in the membrane. This is an uncharacterized protein from Saccharomyces cerevisiae (strain ATCC 204508 / S288c) (Baker's yeast).